Here is a 248-residue protein sequence, read N- to C-terminus: Pyridoxine 5'-phosphate synthase (248 aa).

Position 9 (Asn-9) interacts with 3-amino-2-oxopropyl phosphate. Residue 11–12 (DH) participates in 1-deoxy-D-xylulose 5-phosphate binding. Arg-20 serves as a coordination point for 3-amino-2-oxopropyl phosphate. His-45 acts as the Proton acceptor in catalysis. Residues Arg-47 and His-52 each contribute to the 1-deoxy-D-xylulose 5-phosphate site. Glu-72 functions as the Proton acceptor in the catalytic mechanism. Thr-102 is a binding site for 1-deoxy-D-xylulose 5-phosphate. The active-site Proton donor is the His-193. Residues Gly-194 and 215–216 (GH) contribute to the 3-amino-2-oxopropyl phosphate site.

The protein belongs to the PNP synthase family. As to quaternary structure, homooctamer; tetramer of dimers.

The protein resides in the cytoplasm. The catalysed reaction is 3-amino-2-oxopropyl phosphate + 1-deoxy-D-xylulose 5-phosphate = pyridoxine 5'-phosphate + phosphate + 2 H2O + H(+). Its pathway is cofactor biosynthesis; pyridoxine 5'-phosphate biosynthesis; pyridoxine 5'-phosphate from D-erythrose 4-phosphate: step 5/5. Its function is as follows. Catalyzes the complicated ring closure reaction between the two acyclic compounds 1-deoxy-D-xylulose-5-phosphate (DXP) and 3-amino-2-oxopropyl phosphate (1-amino-acetone-3-phosphate or AAP) to form pyridoxine 5'-phosphate (PNP) and inorganic phosphate. The polypeptide is Pyridoxine 5'-phosphate synthase (Hydrogenovibrio crunogenus (strain DSM 25203 / XCL-2) (Thiomicrospira crunogena)).